Reading from the N-terminus, the 612-residue chain is Dihydroxy-acid dehydratase (612 aa).

Asp-81 contacts Mg(2+). Residue Cys-122 participates in [2Fe-2S] cluster binding. Asp-123 and Lys-124 together coordinate Mg(2+). Position 124 is an N6-carboxylysine (Lys-124). Residue Cys-193 participates in [2Fe-2S] cluster binding. Glu-489 contacts Mg(2+). Ser-515 (proton acceptor) is an active-site residue.

Belongs to the IlvD/Edd family. As to quaternary structure, homodimer. Requires [2Fe-2S] cluster as cofactor. The cofactor is Mg(2+).

It catalyses the reaction (2R)-2,3-dihydroxy-3-methylbutanoate = 3-methyl-2-oxobutanoate + H2O. It carries out the reaction (2R,3R)-2,3-dihydroxy-3-methylpentanoate = (S)-3-methyl-2-oxopentanoate + H2O. Its pathway is amino-acid biosynthesis; L-isoleucine biosynthesis; L-isoleucine from 2-oxobutanoate: step 3/4. The protein operates within amino-acid biosynthesis; L-valine biosynthesis; L-valine from pyruvate: step 3/4. In terms of biological role, functions in the biosynthesis of branched-chain amino acids. Catalyzes the dehydration of (2R,3R)-2,3-dihydroxy-3-methylpentanoate (2,3-dihydroxy-3-methylvalerate) into 2-oxo-3-methylpentanoate (2-oxo-3-methylvalerate) and of (2R)-2,3-dihydroxy-3-methylbutanoate (2,3-dihydroxyisovalerate) into 2-oxo-3-methylbutanoate (2-oxoisovalerate), the penultimate precursor to L-isoleucine and L-valine, respectively. This chain is Dihydroxy-acid dehydratase, found in Xanthomonas euvesicatoria pv. vesicatoria (strain 85-10) (Xanthomonas campestris pv. vesicatoria).